A 68-amino-acid chain; its full sequence is Lividin-1 (68 aa).

A signal peptide spans 1-22 (MFTLKKSLLLLFFLGTINLSLC). Residues 23 to 42 (QEERNADEEERRDERNVEVE) constitute a propeptide that is removed on maturation. Cys-62 and Cys-68 are oxidised to a cystine.

Expressed by the skin glands.

It localises to the secreted. Its function is as follows. Antimicrobial peptide. In Odorrana livida (Green mountain frog), this protein is Lividin-1.